The primary structure comprises 461 residues: Glycogen synthase (461 aa).

Lys-15 contributes to the ADP-alpha-D-glucose binding site.

Belongs to the glycosyltransferase 1 family. Bacterial/plant glycogen synthase subfamily.

The catalysed reaction is [(1-&gt;4)-alpha-D-glucosyl](n) + ADP-alpha-D-glucose = [(1-&gt;4)-alpha-D-glucosyl](n+1) + ADP + H(+). It participates in glycan biosynthesis; glycogen biosynthesis. Its function is as follows. Synthesizes alpha-1,4-glucan chains using ADP-glucose. This chain is Glycogen synthase, found in Fusobacterium nucleatum subsp. nucleatum (strain ATCC 25586 / DSM 15643 / BCRC 10681 / CIP 101130 / JCM 8532 / KCTC 2640 / LMG 13131 / VPI 4355).